We begin with the raw amino-acid sequence, 308 residues long: Porphobilinogen deaminase (308 aa).

Position 240 is an S-(dipyrrolylmethanemethyl)cysteine (C240).

Belongs to the HMBS family. Monomer. The cofactor is dipyrromethane.

It catalyses the reaction 4 porphobilinogen + H2O = hydroxymethylbilane + 4 NH4(+). The protein operates within porphyrin-containing compound metabolism; protoporphyrin-IX biosynthesis; coproporphyrinogen-III from 5-aminolevulinate: step 2/4. In terms of biological role, tetrapolymerization of the monopyrrole PBG into the hydroxymethylbilane pre-uroporphyrinogen in several discrete steps. The chain is Porphobilinogen deaminase from Maridesulfovibrio salexigens (strain ATCC 14822 / DSM 2638 / NCIMB 8403 / VKM B-1763) (Desulfovibrio salexigens).